Reading from the N-terminus, the 220-residue chain is Small ribosomal subunit protein uS3 (220 aa).

A KH type-2 domain is found at 39 to 107 (IREHVEGRLK…RVHINISEIK (69 aa)).

Belongs to the universal ribosomal protein uS3 family. Part of the 30S ribosomal subunit. Forms a tight complex with proteins S10 and S14.

Functionally, binds the lower part of the 30S subunit head. Binds mRNA in the 70S ribosome, positioning it for translation. This chain is Small ribosomal subunit protein uS3, found in Shouchella clausii (strain KSM-K16) (Alkalihalobacillus clausii).